A 351-amino-acid chain; its full sequence is Protein-glutamate methylesterase/protein-glutamine glutaminase 2 (351 aa).

Residues 4 to 121 enclose the Response regulatory domain; sequence KVLVVDDSAL…PQDFNEYQDL (118 aa). Position 55 is a 4-aspartylphosphate (Asp55). The CheB-type methylesterase domain maps to 156–348; sequence RVINTQLVAI…DKMLNYLASL (193 aa). Catalysis depends on residues Ser168, His194, and Asp290.

It belongs to the CheB family. In terms of processing, phosphorylated by CheA. Phosphorylation of the N-terminal regulatory domain activates the methylesterase activity.

The protein localises to the cytoplasm. The catalysed reaction is [protein]-L-glutamate 5-O-methyl ester + H2O = L-glutamyl-[protein] + methanol + H(+). It carries out the reaction L-glutaminyl-[protein] + H2O = L-glutamyl-[protein] + NH4(+). In terms of biological role, involved in chemotaxis. Part of a chemotaxis signal transduction system that modulates chemotaxis in response to various stimuli. Catalyzes the demethylation of specific methylglutamate residues introduced into the chemoreceptors (methyl-accepting chemotaxis proteins or MCP) by CheR. Also mediates the irreversible deamidation of specific glutamine residues to glutamic acid. This is Protein-glutamate methylesterase/protein-glutamine glutaminase 2 from Shewanella sp. (strain MR-4).